The sequence spans 399 residues: Bombesin receptor subtype-3 (399 aa).

The Extracellular segment spans residues 1–41 (MSQRQSQSPNQTLISITNDTETSSSVVSNDTTHKGWTGDNS). N-linked (GlcNAc...) asparagine glycans are attached at residues N10, N18, and N29. Residues 42-63 (PGIEALCAIYITYAGIISVGIL) form a helical membrane-spanning segment. The Cytoplasmic portion of the chain corresponds to 64 to 82 (GNAILIKVFFKTKSMQTVP). Residues 83–103 (NIFITSLAFGDLLLLLTCVPV) traverse the membrane as a helical segment. Topologically, residues 104-121 (DATHYLAEGWLFGKVGCK) are extracellular. An intrachain disulfide couples C120 to C203. A helical transmembrane segment spans residues 122–143 (VLSFIRLTSVGVSVFTLTILSA). The Cytoplasmic segment spans residues 144–163 (DRYKAVVKPLERQPPNAILK). The helical transmembrane segment at 164–184 (TCAKAGGIWIVSMIFALPEAI) threads the bilayer. Topologically, residues 185–220 (FSNVYTFQDPNRNVTFESCNSYPISERLLQEIHSLL) are extracellular. The helical transmembrane segment at 221 to 241 (CFLVFYIIPLSIISVYYSLIA) threads the bilayer. Over 242-272 (RTLYKSTLNIPTEEQSHARKQIESRKRIAKT) the chain is Cytoplasmic. The chain crosses the membrane as a helical span at residues 273 to 293 (VLVLVALFALCWLPNHLLYLY). Topologically, residues 294 to 313 (HSFTYESYANHSDVPFVIII) are extracellular. The helical transmembrane segment at 314–333 (FSRVLAFSNSCVNPFALYWL) threads the bilayer. Topologically, residues 334 to 399 (SKTFQQHFKA…SSAKKGEDKV (66 aa)) are cytoplasmic. Residue C347 is the site of S-palmitoyl cysteine attachment.

It belongs to the G-protein coupled receptor 1 family. Interacts with C6orf89.

It is found in the cell membrane. Role in sperm cell division, maturation, or function. This receptor mediates its action by association with G proteins that activate a phosphatidylinositol-calcium second messenger system. In Mus musculus (Mouse), this protein is Bombesin receptor subtype-3 (Brs3).